A 152-amino-acid chain; its full sequence is Cell division protein SepF (152 aa).

Residues 25-54 (EEREPVQEEKGTKDKAAFQERPQTGKQNVV) are disordered. Residues 28–42 (EPVQEEKGTKDKAAF) are compositionally biased toward basic and acidic residues.

Belongs to the SepF family. Homodimer. Interacts with FtsZ.

It is found in the cytoplasm. In terms of biological role, cell division protein that is part of the divisome complex and is recruited early to the Z-ring. Probably stimulates Z-ring formation, perhaps through the cross-linking of FtsZ protofilaments. Its function overlaps with FtsA. The chain is Cell division protein SepF from Bacillus pumilus (strain SAFR-032).